A 99-amino-acid chain; its full sequence is Integration host factor subunit alpha (99 aa).

It belongs to the bacterial histone-like protein family. Heterodimer of an alpha and a beta chain.

Functionally, this protein is one of the two subunits of integration host factor, a specific DNA-binding protein that functions in genetic recombination as well as in transcriptional and translational control. This chain is Integration host factor subunit alpha, found in Alteromonas mediterranea (strain DSM 17117 / CIP 110805 / LMG 28347 / Deep ecotype).